Consider the following 136-residue polypeptide: Glutamyl-tRNA(Gln) amidotransferase subunit C, mitochondrial (136 aa).

The protein belongs to the GatC family. As to quaternary structure, subunit of the heterotrimeric GatCAB amidotransferase (AdT) complex, composed of A (QRSL1), B (GATB) and C (GATC) subunits.

Its subcellular location is the mitochondrion. It catalyses the reaction L-glutamyl-tRNA(Gln) + L-glutamine + ATP + H2O = L-glutaminyl-tRNA(Gln) + L-glutamate + ADP + phosphate + H(+). Allows the formation of correctly charged Gln-tRNA(Gln) through the transamidation of misacylated Glu-tRNA(Gln) in the mitochondria. The reaction takes place in the presence of glutamine and ATP through an activated gamma-phospho-Glu-tRNA(Gln). This is Glutamyl-tRNA(Gln) amidotransferase subunit C, mitochondrial from Homo sapiens (Human).